The following is a 206-amino-acid chain: Ribosomal RNA large subunit methyltransferase E (206 aa).

Positions 60, 62, 80, 96, and 121 each coordinate S-adenosyl-L-methionine. Lys161 acts as the Proton acceptor in catalysis.

It belongs to the class I-like SAM-binding methyltransferase superfamily. RNA methyltransferase RlmE family.

It is found in the cytoplasm. The catalysed reaction is uridine(2552) in 23S rRNA + S-adenosyl-L-methionine = 2'-O-methyluridine(2552) in 23S rRNA + S-adenosyl-L-homocysteine + H(+). Specifically methylates the uridine in position 2552 of 23S rRNA at the 2'-O position of the ribose in the fully assembled 50S ribosomal subunit. The chain is Ribosomal RNA large subunit methyltransferase E from Hahella chejuensis (strain KCTC 2396).